The primary structure comprises 51 residues: Large ribosomal subunit protein bL33 (51 aa).

The protein belongs to the bacterial ribosomal protein bL33 family.

This chain is Large ribosomal subunit protein bL33, found in Alkalilimnicola ehrlichii (strain ATCC BAA-1101 / DSM 17681 / MLHE-1).